A 327-amino-acid chain; its full sequence is tRNA dimethylallyltransferase (327 aa).

An ATP-binding site is contributed by 14–21 (GPTASGKT). 16–21 (TASGKT) is a binding site for substrate. 2 interaction with substrate tRNA regions span residues 39–42 (DSAL) and 163–167 (QRIQR).

It belongs to the IPP transferase family. In terms of assembly, monomer. Requires Mg(2+) as cofactor.

It carries out the reaction adenosine(37) in tRNA + dimethylallyl diphosphate = N(6)-dimethylallyladenosine(37) in tRNA + diphosphate. Catalyzes the transfer of a dimethylallyl group onto the adenine at position 37 in tRNAs that read codons beginning with uridine, leading to the formation of N6-(dimethylallyl)adenosine (i(6)A). The sequence is that of tRNA dimethylallyltransferase from Xanthomonas oryzae pv. oryzae (strain KACC10331 / KXO85).